The primary structure comprises 644 residues: MKRKTAEVKGEKERNSKQISLEEDKIKGMFNPKIWDKTFQDGLKKEIEDSQPYNWGTIHELVNDDLLRAVRKEIETEIHFTKKETDIYRVNQSGDLANLSGLDWDDLSRLPNLFKLRQILYSKQYRDFFGYVTKAGKLSGSKTDMSINTYTKGCHLLTHDDVIGSRRISFILYLPDPDRKWKSHYGGGLRLFPSILPNVPHSDPSAKLVPQFNQIAFFKVLPGFSFHDVEEVKVDKHRLSIQGWYHIPQVGEEGYIPGEEEAWVRNNTSTLAQIESNVLEDFEFPKDERNILSFHEVKHFEKMLKGDAGAKTDNTPKESMTSVISDSVKLSEAEFTYLSQYISPEHLSSKGIEKLQKQFVENSSLQIESFLNDDKSELLKKVIKQKELEQECPYHSKDVKAPWKTAIPPHKARYLYIDGKEYRNFQTEADILEALNNNDLPNFQFTKDAIKIISDASGNSRENNFDAELALIDLAVFHKSTIFKKYLALLTSLCPVSEQILIRRFRPGMDFTLATKCRFNELLKSNPDIIDAVLEGTLCLTPSAGWESGELGGYELYMMDDDEDNKQYLKEDVEDASVYRADDSGDSVLINDPPAWNTFNLVLRDESVLEFVKYVSWSAKSSRWDVKMKWDVKSCDEDGQEDEA.

In terms of domain architecture, Fe2OG dioxygenase spans S141 to I247. Fe cation-binding residues include H159 and D161. Y173 contacts 2-oxoglutarate. H227 is a binding site for Fe cation. Position 238 (R238) interacts with 2-oxoglutarate. At S607 the chain carries Phosphoserine.

This sequence belongs to the TPA1 family. In terms of assembly, monomer and homodimer. Interacts with FRK1, eRF1 (SUP1), eRF3 (SUP35) and polyadenylate-binding protein PAB1. Interacts with ETT1. It depends on Fe(2+) as a cofactor. L-ascorbate serves as cofactor.

Its subcellular location is the nucleus. It catalyses the reaction [ribosomal protein uS12]-L-proline + 2-oxoglutarate + O2 = [ribosomal protein uS12]-(3S)-3-hydroxy-L-proline + succinate + CO2. The enzyme catalyses [ribosomal protein uS12]-(3S)-3-hydroxy-L-proline + 2-oxoglutarate + O2 = [ribosomal protein uS12]-(3S)-3,4-dihydroxy-L-proline + succinate + CO2. In terms of biological role, prolyl 3,4-dihydroxylase that catalyzes 3,4-dihydroxylation of 'Pro-64' of small ribosomal subunit uS12 (RPS23A and RPS23B), thereby regulating protein translation termination efficiency. Part of a messenger ribonucleoprotein (mRNP) complex at the 3'-UTR of mRNAs. It associates specifically with components of the translation termination complex and is involved in both translation termination and in regulation of normal mRNA decay through translation termination-coupled poly(A) shortening. The protein is Prolyl 3,4-dihydroxylase TPA1 of Saccharomyces cerevisiae (strain ATCC 204508 / S288c) (Baker's yeast).